The chain runs to 499 residues: Glutamate--tRNA ligase (499 aa).

A 'HIGH' region motif is present at residues 12-22 (PSPTGHLHIGN). A 'KMSKS' region motif is present at residues 259–263 (KLSKR). Lys262 lines the ATP pocket.

The protein belongs to the class-I aminoacyl-tRNA synthetase family. Glutamate--tRNA ligase type 1 subfamily. In terms of assembly, monomer.

Its subcellular location is the cytoplasm. It carries out the reaction tRNA(Glu) + L-glutamate + ATP = L-glutamyl-tRNA(Glu) + AMP + diphosphate. Functionally, catalyzes the attachment of glutamate to tRNA(Glu) in a two-step reaction: glutamate is first activated by ATP to form Glu-AMP and then transferred to the acceptor end of tRNA(Glu). This is Glutamate--tRNA ligase from Lactobacillus acidophilus (strain ATCC 700396 / NCK56 / N2 / NCFM).